Reading from the N-terminus, the 1022-residue chain is rDNA transcriptional regulator POL5 (1022 aa).

Acidic residues-rich tracts occupy residues 706-719, 728-748, and 781-802; these read EEFEEIKEENDASE, SESESESDSDDADEKDEEDEA, and DLDQLEGLSDDGGDDEDEESMD. Disordered regions lie at residues 706–748 and 778–805; these read EEFE…EDEA and GEVDLDQLEGLSDDGGDDEDEESMDDEK. Position 789 is a phosphoserine (Ser789).

It belongs to the MYBBP1A family. Interacts with FRK1.

The protein resides in the nucleus. The protein localises to the nucleolus. It catalyses the reaction DNA(n) + a 2'-deoxyribonucleoside 5'-triphosphate = DNA(n+1) + diphosphate. Its activity is regulated as follows. Stimulated by PCNA and inhibited by aphidicolin. Its function is as follows. Plays an important role in the regulation of rRNA transcription. Binds near or at the enhancer region of rRNA repeating units. May have DNA polymerase activity, but it is not required for in vivo function. The protein is rDNA transcriptional regulator POL5 of Saccharomyces cerevisiae (strain ATCC 204508 / S288c) (Baker's yeast).